A 135-amino-acid polypeptide reads, in one-letter code: Single-stranded DNA-binding protein RIM1, mitochondrial (135 aa).

Residues 1-17 constitute a mitochondrion transit peptide; sequence MFLRTQARFFHATTKKM. The region spanning 19-117 is the SSB domain; it reads FSKMSIVGRI…LVQKDINLLK (99 aa).

As to quaternary structure, homotetramer. Interacts with PIF1.

The protein resides in the mitochondrion. This protein binds preferentially and cooperatively to single-stranded DNA (ssDNS). Involved in mitochondrial DNA replication. Stimulates PIF1 helicase activity. The chain is Single-stranded DNA-binding protein RIM1, mitochondrial (RIM1) from Saccharomyces cerevisiae (strain ATCC 204508 / S288c) (Baker's yeast).